The sequence spans 635 residues: Threonine--tRNA ligase (635 aa).

A TGS domain is found at methionine 1 to threonine 61. The tract at residues aspartate 242–proline 532 is catalytic. The Zn(2+) site is built by cysteine 333, histidine 384, and histidine 509.

The protein belongs to the class-II aminoacyl-tRNA synthetase family. As to quaternary structure, homodimer. Requires Zn(2+) as cofactor.

The protein resides in the cytoplasm. It carries out the reaction tRNA(Thr) + L-threonine + ATP = L-threonyl-tRNA(Thr) + AMP + diphosphate + H(+). Catalyzes the attachment of threonine to tRNA(Thr) in a two-step reaction: L-threonine is first activated by ATP to form Thr-AMP and then transferred to the acceptor end of tRNA(Thr). Also edits incorrectly charged L-seryl-tRNA(Thr). The sequence is that of Threonine--tRNA ligase from Desulforamulus reducens (strain ATCC BAA-1160 / DSM 100696 / MI-1) (Desulfotomaculum reducens).